A 534-amino-acid polypeptide reads, in one-letter code: Probable alanine aminotransferase, mitochondrial (534 aa).

The transit peptide at 1-18 (MFKRSLKVLLSNPPINRV) directs the protein to the mitochondrion. The residue at position 352 (K352) is an N6-(pyridoxal phosphate)lysine.

Belongs to the class-I pyridoxal-phosphate-dependent aminotransferase family. Alanine aminotransferase subfamily. In terms of assembly, homodimer. Pyridoxal 5'-phosphate serves as cofactor.

It localises to the mitochondrion matrix. It catalyses the reaction L-alanine + 2-oxoglutarate = pyruvate + L-glutamate. It participates in amino-acid degradation; L-alanine degradation via transaminase pathway; pyruvate from L-alanine: step 1/1. In Dictyostelium discoideum (Social amoeba), this protein is Probable alanine aminotransferase, mitochondrial (gpt).